A 445-amino-acid chain; its full sequence is Cyclic GMP-AMP phosphodiesterase SMPDL3A (445 aa).

A signal peptide spans methionine 1–glycine 22. Residues aspartate 42 and histidine 44 each coordinate Zn(2+). A disulfide bridge links cysteine 59 with cysteine 78. N-linked (GlcNAc...) asparagine glycosylation occurs at asparagine 66. Residue aspartate 107 participates in Zn(2+) binding. Residue histidine 111 coordinates ATP. Asparagine 128 carries an N-linked (GlcNAc...) asparagine glycan. Asparagine 148 is a Zn(2+) binding site. 2 residues coordinate ATP: asparagine 148 and histidine 149. N-linked (GlcNAc...) asparagine glycans are attached at residues asparagine 219 and asparagine 235. Zn(2+)-binding residues include histidine 249, histidine 290, and histidine 292. Residues asparagine 353 and asparagine 364 are each glycosylated (N-linked (GlcNAc...) asparagine). 2 disulfide bridges follow: cysteine 417–cysteine 421 and cysteine 427–cysteine 440.

This sequence belongs to the acid sphingomyelinase family. As to quaternary structure, monomer. Homodimer; homodimerizes following 2',3'-cGAMP-binding. It depends on Zn(2+) as a cofactor.

The protein resides in the secreted. It catalyses the reaction 2',3'-cGAMP + H2O = 5'-pGpA(2'-5') + H(+). It carries out the reaction 5'-pGpA(2'-5') + H2O = 5'-GpA(2'-5') + phosphate. The catalysed reaction is a ribonucleoside 5'-triphosphate + H2O = a ribonucleoside 5'-diphosphate + phosphate + H(+). The enzyme catalyses ATP + H2O = ADP + phosphate + H(+). Its function is as follows. Cyclic-nucleotide phosphodiesterase that acts as a negative regulator of innate immunity by mediating degradation of 2',3'-cGAMP, thereby inhibiting the cGAS-STING signaling. Specifically linearizes 2',3'-cGAMP into 2'5'-bond pGpA and further hydrolyzes pGpA to produce GpA. Also has in vitro nucleotide phosphodiesterase activity with nucleoside triphosphates, such as ATP. Has in vitro activity with p-nitrophenyl-TMP. Has lower activity with nucleoside diphosphates, and no activity with nucleoside monophosphates. Has in vitro activity with CDP-choline, giving rise to CMP and phosphocholine. Has in vitro activity with CDP-ethanolamine. Does not have sphingomyelin phosphodiesterase activity. The sequence is that of Cyclic GMP-AMP phosphodiesterase SMPDL3A (Smpdl3a) from Rattus norvegicus (Rat).